Here is a 70-residue protein sequence, read N- to C-terminus: Large ribosomal subunit protein eL43 (70 aa).

Residues Cys-36, Cys-39, Cys-55, and Cys-58 each coordinate Zn(2+). The C4-type zinc finger occupies 36–58 (CPVCKTTGKVVRIASGVWYCKKC).

This sequence belongs to the eukaryotic ribosomal protein eL43 family. Putative zinc-binding subfamily. As to quaternary structure, part of the 50S ribosomal subunit. Zn(2+) serves as cofactor.

Functionally, binds to the 23S rRNA. The protein is Large ribosomal subunit protein eL43 of Sulfurisphaera tokodaii (strain DSM 16993 / JCM 10545 / NBRC 100140 / 7) (Sulfolobus tokodaii).